Consider the following 166-residue polypeptide: MTDLLHKLNFKIADASPEYKQRRKIQMIRFFTASAVTIFASRFAYRATVSRQYIPTLFQGNHSPPLSYNFTTDAAVAVGTGTLLCGSVTGMTVFGLCWILDVSNIQEFGWRMKSMLGGWESEKKLSEAPMDEESSYIQDSLNDILDGKYDFEEDTEEVHTAEMKTK.

Helical transmembrane passes span 27–49 and 78–100; these read MIRF…RATV and VGTG…CWIL.

It belongs to the AIM11 family.

It localises to the membrane. In Candida dubliniensis (strain CD36 / ATCC MYA-646 / CBS 7987 / NCPF 3949 / NRRL Y-17841) (Yeast), this protein is Altered inheritance of mitochondria protein 11 (AIM11).